A 409-amino-acid chain; its full sequence is MINALRGMKDLLDSDGKLYKFIVETCEQITKNYGYELCETPKMEETSLFKRSVGESSDIVGKEMYQFIDKGGNDVCLRPEGTAGVVRAFIEAKFDKAGGVKRYYYYGSMFRYERPQRGRLREFHQFGVECFGEASVYEDASVILMLNEILDKFGIETTLKINSLGDSECMPKYRQKLISFIDEKKDQLCEDCRRRLVTNPIRVLDCKKEHCQILLKNAPLITENLNEECYSEFEQLKDILTKNGVKFEVDGRLVRGLDYYCKTAFEFVSDEIGSKSAVAGGGRYDRLVDFLGGKSTPAVGWAMGIERIMEILKQKDMPNSRDGIYICALDKKYIDEIYKIGFKLRKNYKVEISYEAKSPNKHLNLADKKFAKLFLCMGEDEAKNGEIWYKNLENKNEKRIKILNLEGEL.

This sequence belongs to the class-II aminoacyl-tRNA synthetase family. As to quaternary structure, homodimer.

The protein localises to the cytoplasm. It catalyses the reaction tRNA(His) + L-histidine + ATP = L-histidyl-tRNA(His) + AMP + diphosphate + H(+). The protein is Histidine--tRNA ligase of Campylobacter fetus subsp. fetus (strain 82-40).